Here is a 324-residue protein sequence, read N- to C-terminus: Glutathione synthetase (324 aa).

The ATP-grasp domain occupies 125-312 (EKLFTTTHFP…ISTIILDNLE (188 aa)). 152–209 (FIKTYKDIIIKPLHGMAGLSIFRIKEHDPNTSVIIETMTKYETIPCISQNYITDIQKG) is a binding site for ATP. Glutamate 283 and asparagine 285 together coordinate Mg(2+).

It belongs to the prokaryotic GSH synthase family. The cofactor is Mg(2+). Requires Mn(2+) as cofactor.

The enzyme catalyses gamma-L-glutamyl-L-cysteine + glycine + ATP = glutathione + ADP + phosphate + H(+). Its pathway is sulfur metabolism; glutathione biosynthesis; glutathione from L-cysteine and L-glutamate: step 2/2. In Buchnera aphidicola subsp. Baizongia pistaciae (strain Bp), this protein is Glutathione synthetase.